The following is a 357-amino-acid chain: Membrane-bound lytic murein transglycosylase C (357 aa).

The N-terminal stretch at 1–16 (MKKILPLVIIAPLLIS) is a signal peptide. Cys17 is lipidated: N-palmitoyl cysteine. The S-diacylglycerol cysteine moiety is linked to residue Cys17.

Belongs to the transglycosylase Slt family.

It localises to the cell outer membrane. It catalyses the reaction Exolytic cleavage of the (1-&gt;4)-beta-glycosidic linkage between N-acetylmuramic acid (MurNAc) and N-acetylglucosamine (GlcNAc) residues in peptidoglycan, from either the reducing or the non-reducing ends of the peptidoglycan chains, with concomitant formation of a 1,6-anhydrobond in the MurNAc residue.. Its function is as follows. Murein-degrading enzyme. May play a role in recycling of muropeptides during cell elongation and/or cell division. The chain is Membrane-bound lytic murein transglycosylase C from Sodalis glossinidius (strain morsitans).